The sequence spans 219 residues: 7-cyano-7-deazaguanine synthase (219 aa).

Position 10 to 20 (10 to 20 (FSGGQDSTTCL)) interacts with ATP. Zn(2+) is bound by residues Cys-188, Cys-197, Cys-200, and Cys-203.

Belongs to the QueC family. Homodimer. It depends on Zn(2+) as a cofactor.

It carries out the reaction 7-carboxy-7-deazaguanine + NH4(+) + ATP = 7-cyano-7-deazaguanine + ADP + phosphate + H2O + H(+). The protein operates within purine metabolism; 7-cyano-7-deazaguanine biosynthesis. Catalyzes the ATP-dependent conversion of 7-carboxy-7-deazaguanine (CDG) to 7-cyano-7-deazaguanine (preQ(0)). The chain is 7-cyano-7-deazaguanine synthase from Clostridium botulinum (strain Langeland / NCTC 10281 / Type F).